The sequence spans 136 residues: Small ribosomal subunit protein uS9 (136 aa).

It belongs to the universal ribosomal protein uS9 family.

The polypeptide is Small ribosomal subunit protein uS9 (Borrelia recurrentis (strain A1)).